The primary structure comprises 327 residues: Sideroflexin-2 (327 aa).

5 helical membrane-spanning segments follow: residues 99–119 (GMLI…VVLW), 143–163 (VTQL…AAIG), 175–195 (LFQR…NIPL), 228–248 (EVVV…PLIM), and 267–287 (FQTL…CALF).

The protein belongs to the sideroflexin family.

Its subcellular location is the mitochondrion membrane. The enzyme catalyses L-serine(in) = L-serine(out). In terms of biological role, mitochondrial amino-acid transporter that mediates transport of serine into mitochondria. The sequence is that of Sideroflexin-2 from Drosophila melanogaster (Fruit fly).